A 431-amino-acid chain; its full sequence is Enolase (431 aa).

Q163 contributes to the (2R)-2-phosphoglycerate binding site. E205 functions as the Proton donor in the catalytic mechanism. The Mg(2+) site is built by D242, E288, and D315. (2R)-2-phosphoglycerate contacts are provided by K340, R369, S370, and K391. K340 serves as the catalytic Proton acceptor.

The protein belongs to the enolase family. Mg(2+) is required as a cofactor.

It is found in the cytoplasm. Its subcellular location is the secreted. The protein resides in the cell surface. The enzyme catalyses (2R)-2-phosphoglycerate = phosphoenolpyruvate + H2O. It participates in carbohydrate degradation; glycolysis; pyruvate from D-glyceraldehyde 3-phosphate: step 4/5. Its function is as follows. Catalyzes the reversible conversion of 2-phosphoglycerate (2-PG) into phosphoenolpyruvate (PEP). It is essential for the degradation of carbohydrates via glycolysis. The polypeptide is Enolase (Bacillus cereus (strain G9842)).